Consider the following 946-residue polypeptide: MRFAFDSNHSQSGAPFKGSRCFFNCQCICCRQGCCVVVVKCCCCFNLNCCNSLGSRKSFPQPAAMRKKVADLEVLRVSRFVAVILVLARWVTAVATLLTSCILLDIFSVPGQSGVADRSQASSRTVHVSVPTTPNETPSSTSETKLKLLYGYTSYDINNDQQVKSNNLCRVLCKSRNRKRQRRRRRRRNHRRRRHRYTKRLHHLMQDNMSGFEQRLNFSDAKCQSLETNYGTNYDLVQGGKLFSQSERSLLVSPLREIEAPWPAIHGSMRNCSKIKRNRANLIWLLIGLVWFEVKLINCNGISSSNYYASNLESHKGCTLCHESGKPNIYTDKDNPHTDYNIYNKYHSNNNFNKKTNQPHNNIAPSDEVRLESIKRQILTKLGLSHKPNVSHPLPKQFIWETIYRVDGGRMIPNNAFGSSGKNLDQKTIKLRAFASPGSHLFNGRGGRTDQRSERDPSHHKYRSPFDFTFNISKNNVYGKVLRNRSLERIDKKNSFLNGWTENRQLKINSQIASMPIELKSHHNSSPKELKSGAVRKVNGINGTQMNENALKKSTYPIDINHSIDNKTHTGKNGEMSHNDYEYFNDYSVQTHDKNRYHEGRSSIGYQPAIHNIEYENQKGHHESFADDHENIDHEDFFGNTQEIITFAEEGTQYRQYRILEFSAQNRRVPSQKLSIRSAQIHIRIDKPHSLWIEKAKSLPEKHLLNTKRKWGANKPHHRIKIWVFQLSTSINITEKGIDKAIIFRASFQVDPKNLGWQKFDLTDTIREWYGHTSHEKLRLLIDCTGCGGRYSLHLFQTSKLRGNSSDYLSTNPNRPFLVLHTESSRTRRVRRRAVDCGGALNGQCCKESFYVSFKALGWDDWIIAPRGYFANYCRGDCTGSFRTPDTFQTFHAHFIEEYRKMGLMNGMRPCCAPIKFSSMSLIYYGDDGIIKRDLPKMVVDECGCP.

Disordered stretches follow at residues 115–142 and 174–194; these read VADR…SSTS and KSRN…RRRR. Positions 128–142 are enriched in low complexity; sequence VSVPTTPNETPSSTS. N-linked (GlcNAc...) asparagine glycans are attached at residues N208, N217, N271, and N389. The tract at residues 436–462 is disordered; the sequence is SPGSHLFNGRGGRTDQRSERDPSHHKY. A compositionally biased stretch (basic and acidic residues) spans 447-459; that stretch reads GRTDQRSERDPSH. N471, N484, N542, N561, N566, N732, and N804 each carry an N-linked (GlcNAc...) asparagine glycan. Intrachain disulfides connect C837-C846, C845-C912, C874-C943, and C878-C945.

The protein belongs to the TGF-beta family. In terms of assembly, homodimer or heterodimer; disulfide-linked. Cleaved in vitro by metalloproteases tok and tld to produce a 30 kDa product. Widely expressed in larval brains.

Its subcellular location is the secreted. Functionally, controls several aspects of neuronal morphogenesis; essential for optic lobe development, EcR-B1 expression in larval brains, mushroom body remodeling, dorsal neuron morphogenesis and motoneuron axon guidance. Ligands Actbeta and daw act redundantly through the Activin receptor Babo and its transcriptional mediator Smad2 (Smox), to regulate neuroblast numbers and proliferation rates in the developing larval brain. This is Inhibin beta chain (Actbeta) from Drosophila melanogaster (Fruit fly).